The primary structure comprises 304 residues: Glutaminase (304 aa).

Substrate contacts are provided by S63, N113, E157, N164, Y188, Y240, and V258.

Belongs to the glutaminase family. In terms of assembly, homotetramer.

It catalyses the reaction L-glutamine + H2O = L-glutamate + NH4(+). The chain is Glutaminase from Christiangramia forsetii (strain DSM 17595 / CGMCC 1.15422 / KT0803) (Gramella forsetii).